The sequence spans 628 residues: (+)-alpha pinene synthase 1, chloroplastic (628 aa).

A chloroplast-targeting transit peptide spans 1-18 (MALVSAVPLNSKLCLCRT). Mg(2+) is bound by residues aspartate 379, aspartate 383, and aspartate 531. A DDXXD motif motif is present at residues 379–383 (DDIYD).

Belongs to the terpene synthase family. Tpsd subfamily. It depends on Mg(2+) as a cofactor. Mn(2+) is required as a cofactor.

The protein resides in the plastid. Its subcellular location is the chloroplast. The enzyme catalyses (2E)-geranyl diphosphate = (1R,5R)-alpha-pinene + diphosphate. Its pathway is terpene metabolism; oleoresin biosynthesis. It participates in secondary metabolite biosynthesis; terpenoid biosynthesis. In terms of biological role, monoterpene synthase (TPS) involved in the biosynthesis of monoterpene natural products included in conifer oleoresin secretions and volatile emissions; these compounds contribute to biotic and abiotic stress defense against herbivores and pathogens. Catalyzes the conversion of (2E)-geranyl diphosphate (GPP) to (+)-alpha-pinene. The chain is (+)-alpha pinene synthase 1, chloroplastic from Pinus banksiana (Jack pine).